We begin with the raw amino-acid sequence, 268 residues long: Mitochondrial distribution and morphology protein 12 (268 aa).

Residues 1 to 256 (MSFEINWQDL…WPSWINLDFN (256 aa)) enclose the SMP-LTD domain. The segment at 75–94 (LPKDKIPEESDSGCQSADGE) is disordered.

It belongs to the MDM12 family. As to quaternary structure, component of the ER-mitochondria encounter structure (ERMES) or MDM complex, composed of MMM1, MDM10, MDM12 and MDM34. An MMM1 homodimer associates with one molecule of MDM12 on each side in a pairwise head-to-tail manner, and the SMP-LTD domains of MMM1 and MDM12 generate a continuous hydrophobic tunnel for phospholipid trafficking.

It localises to the mitochondrion outer membrane. It is found in the endoplasmic reticulum membrane. In terms of biological role, component of the ERMES/MDM complex, which serves as a molecular tether to connect the endoplasmic reticulum (ER) and mitochondria. Components of this complex are involved in the control of mitochondrial shape and protein biogenesis, and function in nonvesicular lipid trafficking between the ER and mitochondria. MDM12 is required for the interaction of the ER-resident membrane protein MMM1 and the outer mitochondrial membrane-resident beta-barrel protein MDM10. The MDM12-MMM1 subcomplex functions in the major beta-barrel assembly pathway that is responsible for biogenesis of all mitochondrial outer membrane beta-barrel proteins, and acts in a late step after the SAM complex. The MDM10-MDM12-MMM1 subcomplex further acts in the TOM40-specific pathway after the action of the MDM12-MMM1 complex. Essential for establishing and maintaining the structure of mitochondria and maintenance of mtDNA nucleoids. The protein is Mitochondrial distribution and morphology protein 12 of Lachancea thermotolerans (strain ATCC 56472 / CBS 6340 / NRRL Y-8284) (Yeast).